The chain runs to 67 residues: Bowman-Birk type proteinase inhibitor A4 (67 aa).

Disulfide bonds link Cys-10–Cys-29, Cys-16–Cys-27, Cys-36–Cys-43, and Cys-40–Cys-57.

This sequence belongs to the Bowman-Birk serine protease inhibitor family. In terms of tissue distribution, expressed in bulb (at protein level).

Functionally, serine protease inhibitor. Inhibits trypsin (Ki=12nM) and weakly inhibits chymotrypsin with (Ki=460nm). Does not inhibit bacterial subtilisin. This chain is Bowman-Birk type proteinase inhibitor A4, found in Hyacinthus orientalis (Common hyacinth).